The following is a 468-amino-acid chain: Dimethylamine methyltransferase MtbB1 (468 aa).

Pyrrolysine 356 is a non-standard amino acid (pyrrolysine).

It belongs to the dimethylamine methyltransferase family.

The catalysed reaction is Co(I)-[dimethylamine-specific corrinoid protein] + dimethylamine + H(+) = methyl-Co(III)-[dimethylamine-specific corrinoid protein] + methylamine. It functions in the pathway one-carbon metabolism; methanogenesis from dimethylamine. Catalyzes the transfer of a methyl group from dimethylamine to the corrinoid cofactor of MtbC. This is Dimethylamine methyltransferase MtbB1 (mtbB1) from Methanosarcina mazei (strain ATCC BAA-159 / DSM 3647 / Goe1 / Go1 / JCM 11833 / OCM 88) (Methanosarcina frisia).